Consider the following 493-residue polypeptide: Aluminum-activated malate transporter 1 (493 aa).

5 helical membrane-spanning segments follow: residues 28-48, 51-71, 104-124, 133-153, and 169-189; these read VGLALVLVSSFYYYQPFGPFT, FGINAMWAVMTVVVVFEFSVG, TVEPILLVMLVFVQAALSTFV, KFDYGILIFILTFALISLSGF, and VVIGGVSCILISIFVCPVWAG. Serine 320 and serine 327 each carry phosphoserine. Threonine 385 is modified (phosphothreonine). The span at 441–452 shows a compositional bias: basic and acidic residues; sequence DNDRSNNVDDSR. The tract at residues 441 to 460 is disordered; the sequence is DNDRSNNVDDSRGGSSQDSC.

It belongs to the aromatic acid exporter (TC 2.A.85) family. In terms of processing, phosphorylated. A reversible phosphorylation is required for activation. In terms of tissue distribution, expressed in roots, but not in shoots. Detected in the root apex in absence of aluminum stress and in root apices, the stele and endodermis of the elongating zone of primary and lateral roots after aluminum stress. Not expressed in cortical and epidermal cells.

Its subcellular location is the cell membrane. Its activity is regulated as follows. Activated by external aluminum. Its function is as follows. Malate transporter critical for aluminum tolerance. The STOP1 transcription factor is required for ALMT1 expression. The chain is Aluminum-activated malate transporter 1 (ALMT1) from Arabidopsis thaliana (Mouse-ear cress).